Here is a 204-residue protein sequence, read N- to C-terminus: N-(5'-phosphoribosyl)anthranilate isomerase (204 aa).

Belongs to the TrpF family.

It catalyses the reaction N-(5-phospho-beta-D-ribosyl)anthranilate = 1-(2-carboxyphenylamino)-1-deoxy-D-ribulose 5-phosphate. It participates in amino-acid biosynthesis; L-tryptophan biosynthesis; L-tryptophan from chorismate: step 3/5. The chain is N-(5'-phosphoribosyl)anthranilate isomerase from Oceanobacillus iheyensis (strain DSM 14371 / CIP 107618 / JCM 11309 / KCTC 3954 / HTE831).